The primary structure comprises 255 residues: EEF1A lysine methyltransferase 4 (255 aa).

Residues tryptophan 26 and tyrosine 30 each coordinate S-adenosyl-L-methionine. Tyrosine 39 bears the Phosphotyrosine mark. S-adenosyl-L-methionine contacts are provided by residues tryptophan 41, glycine 66, 88–89 (DY), 113–114 (DV), and lysine 130. The Required for methyltransferase activity motif lies at 129-134 (EKGTLD).

It belongs to the methyltransferase superfamily.

It catalyses the reaction L-lysyl-[protein] + S-adenosyl-L-methionine = N(6)-methyl-L-lysyl-[protein] + S-adenosyl-L-homocysteine + H(+). The catalysed reaction is N(6)-methyl-L-lysyl-[protein] + S-adenosyl-L-methionine = N(6),N(6)-dimethyl-L-lysyl-[protein] + S-adenosyl-L-homocysteine + H(+). The enzyme catalyses N(6),N(6)-dimethyl-L-lysyl-[protein] + S-adenosyl-L-methionine = N(6),N(6),N(6)-trimethyl-L-lysyl-[protein] + S-adenosyl-L-homocysteine + H(+). Protein-lysine methyltransferase that efficiently catalyzes three successive methylations on 'Lys-36' in eukaryotic translation elongation factor 1 alpha (EEF1A1 or EEF1A2). The sequence is that of EEF1A lysine methyltransferase 4 from Bos taurus (Bovine).